A 337-amino-acid chain; its full sequence is MEENCEDCMKWEEELYWTHFQTLHFTQLLLPGFHNRLVIPRKFSTHCKRKLPQIVTLKSPSGVTYNVGVEEDDEKTMAFRFGWDKFVKDHSLEENDLLVFKFHGVSEFEVLVFDGQTLCEKPTSYFVRKCGHAEKTKASHTGYEQEEHINSDIDTASAQLPVISPTSTVRVSEGKYPLSGFKKMRRELSNDNLDQKADVEMISAGSNKKALSLAKRAISPDGFLVFMKRSHVVSKCFLTIPYKWCVKNMLITRQEVVMQVDQTKWEMKFNIFGARGSGGISTGWKKFVQDNNLREGDVCVFEPANSETKPLHLNVYIFRGEETERTNNVDPVYTISE.

DNA-binding regions (TF-B3) lie at residues 22-116 (TLHF…FDGQ) and 223-321 (FLVF…FRGE).

The protein resides in the nucleus. This chain is B3 domain-containing protein REM16 (REM16), found in Arabidopsis thaliana (Mouse-ear cress).